A 361-amino-acid polypeptide reads, in one-letter code: Phosphoserine aminotransferase (361 aa).

R42 serves as a coordination point for L-glutamate. Pyridoxal 5'-phosphate contacts are provided by residues 76 to 77 (AT), W102, T152, D172, and Q195. At K196 the chain carries N6-(pyridoxal phosphate)lysine. Residue 237 to 238 (NT) participates in pyridoxal 5'-phosphate binding.

It belongs to the class-V pyridoxal-phosphate-dependent aminotransferase family. SerC subfamily. As to quaternary structure, homodimer. The cofactor is pyridoxal 5'-phosphate.

The protein localises to the cytoplasm. The catalysed reaction is O-phospho-L-serine + 2-oxoglutarate = 3-phosphooxypyruvate + L-glutamate. The enzyme catalyses 4-(phosphooxy)-L-threonine + 2-oxoglutarate = (R)-3-hydroxy-2-oxo-4-phosphooxybutanoate + L-glutamate. It functions in the pathway amino-acid biosynthesis; L-serine biosynthesis; L-serine from 3-phospho-D-glycerate: step 2/3. Its pathway is cofactor biosynthesis; pyridoxine 5'-phosphate biosynthesis; pyridoxine 5'-phosphate from D-erythrose 4-phosphate: step 3/5. Its function is as follows. Catalyzes the reversible conversion of 3-phosphohydroxypyruvate to phosphoserine and of 3-hydroxy-2-oxo-4-phosphonooxybutanoate to phosphohydroxythreonine. This Xanthomonas axonopodis pv. citri (strain 306) protein is Phosphoserine aminotransferase.